A 118-amino-acid polypeptide reads, in one-letter code: Large ribosomal subunit protein uL24 (118 aa).

It belongs to the universal ribosomal protein uL24 family. As to quaternary structure, part of the 50S ribosomal subunit.

In terms of biological role, one of two assembly initiator proteins, it binds directly to the 5'-end of the 23S rRNA, where it nucleates assembly of the 50S subunit. One of the proteins that surrounds the polypeptide exit tunnel on the outside of the subunit. This is Large ribosomal subunit protein uL24 from Prochlorococcus marinus (strain NATL1A).